The following is a 270-amino-acid chain: L-cystine-binding protein TcyK (270 aa).

The signal sequence occupies residues Met1–Ala20. Cys21 is lipidated: N-palmitoyl cysteine. Cys21 carries the S-diacylglycerol cysteine lipid modification.

This sequence belongs to the bacterial solute-binding protein 3 family. In terms of assembly, the complex is composed of two ATP-binding proteins (TcyN), two transmembrane proteins (TcyL and TcyM) and two solute-binding proteins (TcyJ and TcyK).

The protein resides in the cell membrane. Functionally, part of the ABC transporter complex TcyJKLMN involved in L-cystine import. Is also involved in cystathionine, djenkolate, and S-methylcysteine transport. The polypeptide is L-cystine-binding protein TcyK (tcyK) (Bacillus subtilis (strain 168)).